Here is a 365-residue protein sequence, read N- to C-terminus: Alanine racemase (365 aa).

The active-site Proton acceptor; specific for D-alanine is Lys32. Position 32 is an N6-(pyridoxal phosphate)lysine (Lys32). Arg128 contributes to the substrate binding site. The active-site Proton acceptor; specific for L-alanine is the Tyr257. Substrate is bound at residue Met305.

This sequence belongs to the alanine racemase family. It depends on pyridoxal 5'-phosphate as a cofactor.

The catalysed reaction is L-alanine = D-alanine. Its pathway is amino-acid biosynthesis; D-alanine biosynthesis; D-alanine from L-alanine: step 1/1. Catalyzes the interconversion of L-alanine and D-alanine. May also act on other amino acids. The sequence is that of Alanine racemase (alr) from Francisella tularensis subsp. holarctica (strain FTNF002-00 / FTA).